The sequence spans 978 residues: LRR receptor-like serine/threonine-protein kinase ER1 (978 aa).

Positions 1–24 are cleaved as a signal peptide; the sequence is MTPAPAAASYRALVALLLVAVAVA. Topologically, residues 25 to 577 are extracellular; that stretch reads DDGSTLLEIK…GHQQKPLISK (553 aa). N-linked (GlcNAc...) asparagine glycans are attached at residues asparagine 62 and asparagine 71. 20 LRR repeats span residues 66-87, 88-112, 114-136, 137-159, 160-184, 186-208, 209-232, 233-257, 259-278, 279-302, 304-327, 328-350, 352-375, 377-399, 400-423, 424-447, 449-470, 471-494, 496-518, and 519-543; these read AVAALNLSGLNLGGEISPAVGR, LKGIVSIDLKSNGLSGQIPDEIGDC, SLKTLDLSFNSLDGDIPFSVSKL, KHIESLILKNNQLIGVIPSTLSQ, LPNLKILDLAQNKLSGEIPRLIYWN, VLQYLGLRGNNLEGSISPDICQL, TGLWYFDVKNNSLTGPIPETIGNC, TSFQVLDLSYNKLSGSIPFNIGFLQ, ATLSLQGNMFTGPIPSVIGL, MQALAVLDLSYNQLSGPIPSILGN, TYTEKLYMQGNKLTGPIPPELGNM, STLHYLELNDNQLSGFIPPEFGK, TGLFDLNLANNNFEGPIPDNISSC, NLNSFNAYGNRLNGTIPPSLHKL, ESMTYLNLSSNFLSGSIPIELSRI, NNLDTLDLSCNMITGPIPSTIGSL, HLLRLNLSNNGLVGFIPAEIGN, LRSIMEIDMSNNHLGGLIPQELGM, QNLMLLNLKNNNITGDVSSLMNC, and FSLNILNVSYNNLAGVVPTDNNFSR. N-linked (GlcNAc...) asparagine glycosylation is found at asparagine 218 and asparagine 231. 2 N-linked (GlcNAc...) asparagine glycosylation sites follow: asparagine 302 and asparagine 326. N-linked (GlcNAc...) asparagine glycosylation is found at asparagine 371, asparagine 389, and asparagine 406. Asparagine 454 carries an N-linked (GlcNAc...) asparagine glycan. N-linked (GlcNAc...) asparagine glycosylation is found at asparagine 507, asparagine 525, and asparagine 540. The helical transmembrane segment at 578–598 threads the bilayer; sequence AAILGIAVGGLVILLMILVAV. The Cytoplasmic segment spans residues 599-978; that stretch reads CRPHSPPVFK…FGEVISQNTE (380 aa). Positions 645-916 constitute a Protein kinase domain; it reads LSEKYIIGYG…EVVRVLDCLV (272 aa). ATP-binding positions include 651-659 and lysine 673; that span reads IGYGASSTV. The Proton acceptor role is filled by aspartate 771.

The protein belongs to the protein kinase superfamily. Ser/Thr protein kinase family.

The protein resides in the cell membrane. The enzyme catalyses L-seryl-[protein] + ATP = O-phospho-L-seryl-[protein] + ADP + H(+). It catalyses the reaction L-threonyl-[protein] + ATP = O-phospho-L-threonyl-[protein] + ADP + H(+). Receptor kinase involved in the regulation of thermotolerance. Functions as a positive regulator of heat tolerance. May be involved in the regulation of cell proliferation and cell growth. This chain is LRR receptor-like serine/threonine-protein kinase ER1, found in Oryza sativa subsp. japonica (Rice).